Consider the following 567-residue polypeptide: Oxygen-dependent choline dehydrogenase (567 aa).

FAD is bound at residue 4–33 (DYIIIGAGSAGNVLAARLTEDADVTVLLLE). The active-site Proton acceptor is the His473.

It belongs to the GMC oxidoreductase family. Requires FAD as cofactor.

It catalyses the reaction choline + A = betaine aldehyde + AH2. It carries out the reaction betaine aldehyde + NAD(+) + H2O = glycine betaine + NADH + 2 H(+). The protein operates within amine and polyamine biosynthesis; betaine biosynthesis via choline pathway; betaine aldehyde from choline (cytochrome c reductase route): step 1/1. Involved in the biosynthesis of the osmoprotectant glycine betaine. Catalyzes the oxidation of choline to betaine aldehyde and betaine aldehyde to glycine betaine at the same rate. This is Oxygen-dependent choline dehydrogenase from Yersinia pestis bv. Antiqua (strain Antiqua).